Reading from the N-terminus, the 342-residue chain is (Lyso)-N-acylphosphatidylethanolamine lipase (342 aa).

The AB hydrolase-1 domain occupies 70-324 (PLVMVHGFGG…IEGASHHVYA (255 aa)).

It belongs to the peptidase S33 family. ABHD4/ABHD5 subfamily.

It carries out the reaction N-hexadecanoyl-1,2-di-(9Z-octadecenoyl)-sn-glycero-3-phosphoethanolamine + H2O = N-hexadecanoyl-1-(9Z-octadecenoyl)-sn-glycero-3-phosphoethanolamine + (9Z)-octadecenoate + H(+). The catalysed reaction is an N-acyl-1,2-diacyl-sn-glycero-3-phosphoethanolamine + H2O = N,1-diacyl-sn-glycero-3-phosphoethanolamine + a fatty acid + H(+). The enzyme catalyses N-hexadecanoyl-1-(9Z-octadecenoyl)-sn-glycero-3-phosphoethanolamine + H2O = N-hexadecanoyl-sn-glycero-3-phosphoethanolamine + (9Z)-octadecenoate + H(+). It catalyses the reaction N-octadecanoyl-1-(9Z-octadecenoyl)-sn-glycero-3-phosphoethanolamine + H2O = N-octadecanoyl-sn-glycero-3-phospho-ethanolamine + (9Z)-octadecenoate + H(+). It carries out the reaction N-eicosanoyl-1-(9Z-octadecenoyl)-sn-glycero-3-phosphoethanolamine + H2O = N-eicosanoyl-sn-glycero-3-phosphoethanolamine + (9Z)-octadecenoate + H(+). The catalysed reaction is N,1-di-(9Z-octadecenoyl)-sn-glycero-3-phosphoethanolamine + H2O = N-(9Z-octadecenoyl)-sn-glycero-3-phosphoethanolamine + (9Z)-octadecenoate + H(+). The enzyme catalyses N-(5Z,8Z,11Z,14Z-eicosatetraenoyl)-1-(9Z-octadecenoyl)-sn-glycero-3-phosphoethanolamine + H2O = N-(5Z,8Z,11Z,14Z-eicosatetraenoyl)-sn-glycero-3-phosphoethanolamine + (9Z)-octadecenoate + H(+). It catalyses the reaction 1-octadecanoyl-2-(9Z-octadecenoyl)-sn-glycero-3-phospho-(N-hexadecanoyl)-serine + H2O = 1-octadecanoyl-2-hydroxy-sn-glycero-3-phospho-(N-hexadecanoyl)-serine + (9Z)-octadecenoate + H(+). It carries out the reaction 1-O-(1Z-octadecenoyl)-2-(9Z-octadecenoyl)-sn-glycero-3-phospho-N-hexadecanoyl-ethanolamine + H2O = 1-O-(1Z-octadecenyl)-sn-glycero-3-phospho-N-hexadecanoyl-ethanolamine + (9Z)-octadecenoate + H(+). The catalysed reaction is N,1-diacyl-sn-glycero-3-phosphoethanolamine + H2O = N-acyl-sn-glycero-3-phosphoethanolamine + a fatty acid + H(+). Its function is as follows. Lysophospholipase selective for N-acyl phosphatidylethanolamine (NAPE). Contributes to the biosynthesis of N-acyl ethanolamines, including the endocannabinoid anandamide by hydrolyzing the sn-1 and sn-2 acyl chains from N-acyl phosphatidylethanolamine (NAPE) generating glycerophospho-N-acyl ethanolamine (GP-NAE), an intermediate for N-acyl ethanolamine biosynthesis. Hydrolyzes substrates bearing saturated, monounsaturated, polyunsaturated N-acyl chains. Shows no significant activity towards other lysophospholipids, including lysophosphatidylcholine, lysophosphatidylethanolamine and lysophosphatidylserine. The polypeptide is (Lyso)-N-acylphosphatidylethanolamine lipase (Bos taurus (Bovine)).